A 608-amino-acid polypeptide reads, in one-letter code: Tectonic-3 (608 aa).

Residues 1–22 (MRTPQLALLQVFLLMFPDGVRP) form the signal peptide. Residues 23–58 (QPSSSPSGAVPTSLDLQPGTVGGTLQSSSEATATRP) form a disordered region. Over 23 to 586 (QPSSSPSGAV…AFSRGVSSQK (564 aa)) the chain is Extracellular. Residues 45 to 54 (GTLQSSSEAT) are compositionally biased toward polar residues. 3 N-linked (GlcNAc...) asparagine glycosylation sites follow: asparagine 78, asparagine 179, and asparagine 347. A helical membrane pass occupies residues 587 to 607 (CSVSPVLILCLLLLGVLNLET). Position 608 (threonine 608) is a topological domain, cytoplasmic.

Belongs to the tectonic family. Part of the tectonic-like complex (also named B9 complex).

It localises to the membrane. Its function is as follows. Part of the tectonic-like complex which is required for tissue-specific ciliogenesis and may regulate ciliary membrane composition. May be involved in apoptosis regulation. Necessary for signal transduction through the sonic hedgehog (Shh) signaling pathway. The sequence is that of Tectonic-3 (TCTN3) from Macaca fascicularis (Crab-eating macaque).